Consider the following 126-residue polypeptide: Spermidine export protein MdtJ (126 aa).

4 consecutive transmembrane segments (helical) span residues 1–21, 30–50, 54–74, and 81–101; these read MIYW…TLSM, ITGH…LSLA, VALG…ITLF, and EPFS…IVML.

Belongs to the drug/metabolite transporter (DMT) superfamily. Small multidrug resistance (SMR) (TC 2.A.7.1) family. MdtJ subfamily. As to quaternary structure, forms a complex with MdtI.

It is found in the cell inner membrane. Its function is as follows. Catalyzes the excretion of spermidine. The protein is Spermidine export protein MdtJ of Sodalis glossinidius (strain morsitans).